We begin with the raw amino-acid sequence, 467 residues long: Zinc finger protein mex-6 (467 aa).

Composition is skewed to low complexity over residues Met-1–Gln-22 and Ser-179–Ser-195. Disordered regions lie at residues Met-1–Pro-35 and Thr-163–Ser-209. Thr-190 bears the Phosphothreonine mark. Residues Arg-196 to Arg-207 are compositionally biased toward basic and acidic residues. 2 C3H1-type zinc fingers span residues Asn-273–Lys-302 and Lys-317–Asp-347. Positions Ile-425–Phe-451 are disordered. Phosphoserine is present on Ser-457.

As to quaternary structure, interacts (probably when phosphorylated on Thr-190) with plk-1 (via POLO box domain) and plk-2 (via POLO box domain). Phosphorylation on Ser-457 by par-1 promotes localization of the protein to the anterior cytoplasm of the zygote.

The protein localises to the cytoplasm. In terms of biological role, functions with mex-5 to affect embryonic viability, establish soma germline asymmetry in embryos and establish plk-1, pie-1, mex-1, and pos-1 asymmetry in embryos. Also affects formation of intestinal cells. This chain is Zinc finger protein mex-6 (mex-6), found in Caenorhabditis elegans.